The sequence spans 896 residues: Desmocollin-3 (896 aa).

The signal sequence occupies residues 1–27; the sequence is MAAAGPRRSVRGAVCLHLLLTLVIFSR. Positions 28-135 are excised as a propeptide; the sequence is AGEACKKVIL…RETVLRRAKR (108 aa). Cadherin domains follow at residues 136 to 243, 244 to 355, 356 to 471, 472 to 579, and 580 to 690; these read RWAP…HPVF, TEAI…APTF, RQNA…GPEC, TPAA…EILQ, and EYVV…ILGK. The Extracellular segment spans residues 136–690; that stretch reads RWAPIPCSMQ…SRSTGVILGK (555 aa). Asparagine 166 is a glycosylation site (N-linked (GlcNAc...) asparagine). N-linked (GlcNAc...) asparagine glycans are attached at residues asparagine 392, asparagine 546, and asparagine 629. The helical transmembrane segment at 691–711 threads the bilayer; the sequence is WAILAILLGIALLFSVLLTLV. At 712–896 the chain is on the cytoplasmic side; it reads CGVFGATKGK…ITLAEACTKR (185 aa).

As to quaternary structure, may form homodimers. Interacts with DSG1; there is evidence to suggest that the interaction promotes cell-cell adhesion of keratinocytes. In terms of tissue distribution, expressed throughout the basal and spinous layer of the epidermis with weak expression in the granular layer (at protein level). Also expressed in the buccal mucosa, esophagus and cervix (at protein level).

The protein localises to the cell membrane. It is found in the cell junction. The protein resides in the desmosome. It localises to the cytoplasm. A component of desmosome cell-cell junctions which are required for positive regulation of cellular adhesion. Required for cell-cell adhesion in the epidermis, as a result required for the maintenance of the dermal cohesion and the dermal barrier function. Required for cell-cell adhesion of epithelial cell layers surrounding the telogen hair club, as a result plays an important role in telogen hair shaft anchorage. Essential for successful completion of embryo compaction and embryo development. The protein is Desmocollin-3 (DSC3) of Homo sapiens (Human).